A 520-amino-acid chain; its full sequence is Glutamyl-tRNA(Gln) amidotransferase subunit A (520 aa).

Catalysis depends on charge relay system residues lysine 80 and serine 155. Serine 179 functions as the Acyl-ester intermediate in the catalytic mechanism.

Belongs to the amidase family. GatA subfamily. Heterotrimer of A, B and C subunits.

The enzyme catalyses L-glutamyl-tRNA(Gln) + L-glutamine + ATP + H2O = L-glutaminyl-tRNA(Gln) + L-glutamate + ADP + phosphate + H(+). In terms of biological role, allows the formation of correctly charged Gln-tRNA(Gln) through the transamidation of misacylated Glu-tRNA(Gln) in organisms which lack glutaminyl-tRNA synthetase. The reaction takes place in the presence of glutamine and ATP through an activated gamma-phospho-Glu-tRNA(Gln). This Renibacterium salmoninarum (strain ATCC 33209 / DSM 20767 / JCM 11484 / NBRC 15589 / NCIMB 2235) protein is Glutamyl-tRNA(Gln) amidotransferase subunit A.